We begin with the raw amino-acid sequence, 70 residues long: Melittin-N (70 aa).

The first 21 residues, 1-21, serve as a signal peptide directing secretion; the sequence is MKFLVNVALVFMVVYISYIYA. Positions 22 to 43 are cleaved as a propeptide — removed by a dipeptidylpeptidase; sequence APEPEPAPEPEAEADAEADPEA. Position 44 is an N-formylglycine; partial (Gly-44). Glutamine amide is present on Gln-69.

This sequence belongs to the melittin family. As to quaternary structure, monomer (in solution and for integration into membranes), homotetramer (in solution and potentially as a toroidal pore in membranes), and potenially homomultimer (as a toroidal pore in membranes). In terms of tissue distribution, expressed by the venom gland.

It localises to the secreted. It is found in the target cell membrane. Its function is as follows. Main toxin of bee venom with strong hemolytic activity and antimicrobial activity. It has enhancing effects on bee venom phospholipase A2 activity. This amphipathic toxin binds to negatively charged membrane surface and forms pore by inserting into lipid bilayers inducing the leakage of ions and molecules and the enhancement of permeability that ultimately leads to cell lysis. It acts as a voltage-gated pore with higher selectivity for anions over cations. The ion conductance has been shown to be voltage-dependent. Self-association of melittin in membranes is promoted by high ionic strength, but not by the presence of negatively charged lipids. In vivo, intradermal injection into healthy human volunteers produce sharp pain sensation and an inflammatory response. It produces pain by activating primary nociceptor cells directly and indirectly due to its ability to activate plasma membrane phospholipase A2 and its pore-forming activity. Shows lower cytotoxicity when tested on E.coli and cancer cell lines than melittin, as well as lower anti-inflammatory properties and lower properties to interact to small unilamellar liposomes. The protein is Melittin-N (MELT) of Apis cerana (Indian honeybee).